Here is a 720-residue protein sequence, read N- to C-terminus: Glycine--tRNA ligase beta subunit (720 aa).

Belongs to the class-II aminoacyl-tRNA synthetase family. As to quaternary structure, tetramer of two alpha and two beta subunits.

The protein localises to the cytoplasm. The enzyme catalyses tRNA(Gly) + glycine + ATP = glycyl-tRNA(Gly) + AMP + diphosphate. This chain is Glycine--tRNA ligase beta subunit, found in Dinoroseobacter shibae (strain DSM 16493 / NCIMB 14021 / DFL 12).